Reading from the N-terminus, the 312-residue chain is Beta-ketoacyl-[acyl-carrier-protein] synthase III 1 (312 aa).

Active-site residues include Cys113 and His237. Residues 238–242 (QANIR) are ACP-binding. Asn267 is a catalytic residue.

The protein belongs to the thiolase-like superfamily. FabH family. In terms of assembly, homodimer.

The protein resides in the cytoplasm. The enzyme catalyses malonyl-[ACP] + acetyl-CoA + H(+) = 3-oxobutanoyl-[ACP] + CO2 + CoA. Its pathway is lipid metabolism; fatty acid biosynthesis. Catalyzes the condensation reaction of fatty acid synthesis by the addition to an acyl acceptor of two carbons from malonyl-ACP. Catalyzes the first condensation reaction which initiates fatty acid synthesis and may therefore play a role in governing the total rate of fatty acid production. Possesses both acetoacetyl-ACP synthase and acetyl transacylase activities. Its substrate specificity determines the biosynthesis of branched-chain and/or straight-chain of fatty acids. This chain is Beta-ketoacyl-[acyl-carrier-protein] synthase III 1, found in Halalkalibacterium halodurans (strain ATCC BAA-125 / DSM 18197 / FERM 7344 / JCM 9153 / C-125) (Bacillus halodurans).